The primary structure comprises 307 residues: 3-ketodihydrosphingosine reductase TSC10 (307 aa).

Leu-11 contributes to the NADP(+) binding site. Residues Gly-14, Ser-16, and Gly-18 each coordinate NADPH. Residues 14–18 (GGSQG) carry the GXSXG motif. Leu-19 lines the NADP(+) pocket. The NADPH site is built by Arg-40, Lys-44, and Leu-74. Ser-147 acts as the Proton donor in catalysis. Residues Tyr-161, Lys-165, and Ser-194 each coordinate NADP(+). Tyr-161 (proton acceptor) is an active-site residue. Residue Lys-165 is the Lowers pKa of active site Tyr of the active site. Residues 261–281 (YFLWPLGWLLGALVNLLVVPI) form a helical membrane-spanning segment.

It belongs to the short-chain dehydrogenases/reductases (SDR) family.

The protein localises to the endoplasmic reticulum membrane. The enzyme catalyses sphinganine + NADP(+) = 3-oxosphinganine + NADPH + H(+). Its pathway is lipid metabolism; sphingolipid metabolism. Catalyzes the reduction of 3'-oxosphinganine (3-ketodihydrosphingosine/KDS) to sphinganine (dihydrosphingosine/DHS), the second step of de novo sphingolipid biosynthesis. The polypeptide is 3-ketodihydrosphingosine reductase TSC10 (TSC10) (Eremothecium gossypii (strain ATCC 10895 / CBS 109.51 / FGSC 9923 / NRRL Y-1056) (Yeast)).